The sequence spans 62 residues: Photosystem II reaction center protein Z (62 aa).

2 helical membrane passes run 8–28 and 41–61; these read AVFA…VVFA and FSGT…NSLI.

The protein belongs to the PsbZ family. As to quaternary structure, PSII is composed of 1 copy each of membrane proteins PsbA, PsbB, PsbC, PsbD, PsbE, PsbF, PsbH, PsbI, PsbJ, PsbK, PsbL, PsbM, PsbT, PsbY, PsbZ, Psb30/Ycf12, at least 3 peripheral proteins of the oxygen-evolving complex and a large number of cofactors. It forms dimeric complexes.

It is found in the plastid. The protein localises to the chloroplast thylakoid membrane. Functionally, may control the interaction of photosystem II (PSII) cores with the light-harvesting antenna, regulates electron flow through the 2 photosystem reaction centers. PSII is a light-driven water plastoquinone oxidoreductase, using light energy to abstract electrons from H(2)O, generating a proton gradient subsequently used for ATP formation. The sequence is that of Photosystem II reaction center protein Z from Spinacia oleracea (Spinach).